A 443-amino-acid chain; its full sequence is Differentially expressed in FDCP 8 homolog A (443 aa).

Residues 1-49 form a disordered region; it reads MEYDDKLVRFRQGHLNPFDKQGGAERHPADSEAQPPKDSSTISPHSIPE. Phorbol-ester/DAG-type zinc fingers lie at residues 134-185 and 364-424; these read EHRF…TKPC and IHTT…STSC.

This sequence belongs to the DEF8 family.

Positively regulates lysosome peripheral distribution and ruffled border formation in osteoclasts. Involved in bone resorption. The protein is Differentially expressed in FDCP 8 homolog A (def8-a) of Xenopus laevis (African clawed frog).